The sequence spans 177 residues: Ribulose bisphosphate carboxylase small subunit, chloroplastic 4 (177 aa).

Residues 1–56 (MASSMMASTAAAVARAGPAQTNMVPFNACRSSVPFPATRKANNDLSTLPSNGGRVS) constitute a chloroplast transit peptide.

The protein belongs to the RuBisCO small chain family. In terms of assembly, heterohexadecamer of 8 large and 8 small subunits.

It localises to the plastid. Its subcellular location is the chloroplast. In terms of biological role, ruBisCO catalyzes two reactions: the carboxylation of D-ribulose 1,5-bisphosphate, the primary event in carbon dioxide fixation, as well as the oxidative fragmentation of the pentose substrate. Both reactions occur simultaneously and in competition at the same active site. Although the small subunit is not catalytic it is essential for maximal activity. The chain is Ribulose bisphosphate carboxylase small subunit, chloroplastic 4 from Lemna gibba (Swollen duckweed).